We begin with the raw amino-acid sequence, 114 residues long: Prostate stem cell antigen (114 aa).

The signal sequence occupies residues 1–11; that stretch reads MAGLALQPGTA. Residues 12–86 form the UPAR/Ly6 domain; the sequence is LLCYSCKAQV…CCDTDLCNAS (75 aa). Cystine bridges form between Cys-14–Cys-39, Cys-17–Cys-26, Cys-32–Cys-57, Cys-61–Cys-77, and Cys-78–Cys-83. An N-linked (GlcNAc...) asparagine glycan is attached at Asn-31. Ser-86 is lipidated: GPI-anchor amidated serine. A propeptide spans 86-114 (removed in mature form); that stretch reads SGAHALQPAAAILALLPALGLLLWGPGQL.

Interacts with CHRNA4. Post-translationally, N-glycosylated. In terms of tissue distribution, highly expressed in prostate (basal, secretory and neuroendocrine epithelium cells). Also found in bladder (transitional epithelium), placenta (trophoblasts), stomach (neuroendocrine cells), colon (neuroendocrine cells) and kidney (collecting ducts). Overexpressed in prostate cancers and expression is correlated with tumor stage, grade and androgen-independence. Highly expressed in prostate cancer bone metastases. Expressed in gastric epithelial cells, mainly in the isthmus (at protein level). Not detected in normal intestinal epithelium (at protein level). Expressed in brain cortex; expression is significantly increased in the front cortex of Alzheimer disease patients.

The protein localises to the cell membrane. Functionally, may be involved in the regulation of cell proliferation. Has a cell-proliferation inhibition activity in vitro. Its function is as follows. May act as a modulator of nicotinic acetylcholine receptors (nAChRs) activity. In vitro inhibits nicotine-induced signaling probably implicating alpha-3:beta-2- or alpha-7-containing nAChRs. The chain is Prostate stem cell antigen (PSCA) from Homo sapiens (Human).